The following is a 173-amino-acid chain: Thiol-disulfide oxidoreductase ResA (173 aa).

The helical; Signal-anchor for type II membrane protein transmembrane segment at 10-29 (VIILLILCGAVGFTLYQGYF) threads the bilayer. Positions 35–173 (MEIGKEAPNF…LEEYLKKITP (139 aa)) constitute a Thioredoxin domain. Cys-73 and Cys-76 are joined by a disulfide.

This sequence belongs to the thioredoxin family. ResA subfamily.

It localises to the cell membrane. It participates in protein modification; cytochrome c assembly. Its function is as follows. Thiol-disulfide oxidoreductase which is required in disulfide reduction during c-type cytochrome synthesis. May accept reducing equivalents from CcdA, leading to breakage of disulfide bonds in apocytochrome c; following this reduction heme can be covalently attached. The sequence is that of Thiol-disulfide oxidoreductase ResA from Bacillus thuringiensis subsp. konkukian (strain 97-27).